A 60-amino-acid polypeptide reads, in one-letter code: Protein P7 (60 aa).

Residues 28–48 traverse the membrane as a helical segment; sequence FIGVTLIGMFISYYLYALISI.

The protein resides in the host membrane. This Vitis vinifera (Grape) protein is Protein P7.